A 234-amino-acid polypeptide reads, in one-letter code: MVYARPIFGLCGGILWLSPERRSFTILFYVDNSFICSGRLCRKGGVNEHKRQLHNVFTLIPFVLLYLFYDVTTGAAMLSGVSSHILLDFMTPTGCPFFYPIYKGRYRVDWRHKGSGPREKRALTTIGILAAILLLVIYAPSPFAPTSAISQWKGSGSGASNNRTDINVNFNFRGNGDTWIHPYPNGSIFIDYVSDGDSRVYRYRGISRGGQGKHLKLDSNTTENKTTKQNETGG.

The disordered stretch occupies residues G212 to G234. Positions N220–G234 are enriched in low complexity.

This is an uncharacterized protein from Methanothermobacter thermautotrophicus (Methanobacterium thermoformicicum).